The chain runs to 406 residues: Phosphorylase b kinase gamma catalytic chain, liver/testis isoform (406 aa).

Residues 24–291 (YDPKDVIGRG…AEQALQHPFF (268 aa)) enclose the Protein kinase domain. Residues 30–38 (IGRGVSSVV) and lysine 53 each bind ATP. Aspartate 153 (proton acceptor) is an active-site residue. A calmodulin-binding (domain-N) region spans residues 306–330 (QRFRVAVWTVLAAGRVALSTHRVRP). The residue at position 345 (serine 345) is a Phosphoserine. The calmodulin-binding (domain-C) stretch occupies residues 346 to 370 (VRHLIDNCAFRLYGHWVKKGEQQNR).

Belongs to the protein kinase superfamily. CAMK Ser/Thr protein kinase family. In terms of assembly, hexadecamer of 4 heterotetramers, each composed of alpha, beta, gamma, and delta subunits. Alpha (PHKA1 or PHKA2) and beta (PHKB) are regulatory subunits, gamma (PHKG1 or PHKG2) is the catalytic subunit, and delta is calmodulin.

The enzyme catalyses 2 ATP + phosphorylase b = 2 ADP + phosphorylase a.. In terms of biological role, catalytic subunit of the phosphorylase b kinase (PHK), which mediates the neural and hormonal regulation of glycogen breakdown (glycogenolysis) by phosphorylating and thereby activating glycogen phosphorylase. May regulate glycogeneolysis in the testis. In vitro, phosphorylates PYGM. This chain is Phosphorylase b kinase gamma catalytic chain, liver/testis isoform (PHKG2), found in Homo sapiens (Human).